Consider the following 296-residue polypeptide: Sulfotransferase 1C2 (296 aa).

49 to 54 (KAGTTW) serves as a coordination point for 3'-phosphoadenylyl sulfate. Substrate is bound at residue 107–109 (KTH). The Proton acceptor role is filled by histidine 109. 3'-phosphoadenylyl sulfate is bound by residues arginine 131, serine 139, tyrosine 194, and 228–233 (TSFEKM). Position 139 is a phosphoserine (serine 139). Phosphoserine is present on serine 254. Residue 256 to 260 (FMRKG) coordinates 3'-phosphoadenylyl sulfate.

This sequence belongs to the sulfotransferase 1 family. As to expression, found in adult stomach, kidney and thyroid gland, and in fetal kidney and liver.

It is found in the cytoplasm. Its subcellular location is the lysosome. The protein resides in the mitochondrion. It catalyses the reaction a phenol + 3'-phosphoadenylyl sulfate = an aryl sulfate + adenosine 3',5'-bisphosphate + H(+). The enzyme catalyses cholesterol + 3'-phosphoadenylyl sulfate = cholesterol sulfate + adenosine 3',5'-bisphosphate + H(+). Sulfotransferase that utilizes 3'-phospho-5'-adenylyl sulfate (PAPS) to catalyze the sulfate conjugation of phenolic compounds. Does not transfer sulfate to steroids, dopamine, acetaminophen, or alpha-naphthol. Except in mitochondria, where it can add sulfate to cholesterol producing cholesterol sulfate, which alters mitochondrial membrane organization, and impacts protein complex mobility increasing state-III respiration, thereby modulating mitochondrial respiration. Catalyzes the sulfation of the carcinogenic N-hydroxy-2-acetylaminofluorene leading to highly reactive intermediates capable of forming DNA adducts, potentially resulting in mutagenesis. The sequence is that of Sulfotransferase 1C2 (SULT1C2) from Homo sapiens (Human).